A 338-amino-acid chain; its full sequence is MDINSTSPLNASPQPDSPPPANASAFAHQLSGFQYSPPHAADSLLPQVEADSPYLDTRHPYSQYLDSAYPYPSPCEWQHDLYTRTRERSPHPSEQRPHARVLQGAPEHDQDQHLEAAGPREGSWQVGPSRSGPSQAGLSPSATPLNPSPPPHATDLETKHPYSQYLDWANPSLLDWQQDLHTRATASPAPLTAERGRSPQPSEQQPHARALQVPEYDQDLIWQRVDAAGPQAGPWQVGPSHSGPSQARPSHAWPSSSAGAEPAELSDFVMDSGVRAWDHWFLAPHMASEDQMSMLRATGLMPTAEVPTTTFLMMGMRHVAEFRGEGVIRIRPSVDFDI.

A compositionally biased stretch (polar residues) spans methionine 1–glutamine 14. Disordered regions lie at residues methionine 1–valine 48, threonine 85–threonine 158, serine 187–arginine 209, and proline 230–glycine 259. Residues threonine 85–proline 97 show a composition bias toward basic and acidic residues. Polar residues predominate over residues valine 126 to leucine 138. Polar residues predominate over residues serine 242–alanine 258.

The protein resides in the secreted. In terms of biological role, putative symbiotic effector that modulates nodulation in legumes. When delivered into the plant cell, modulates the activity of signal transduction pathways that culminate in activation of PR proteins. In Sinorhizobium fredii (strain NBRC 101917 / NGR234), this protein is Nodulation outer protein L (nopL).